Reading from the N-terminus, the 46-residue chain is Iota-conotoxin-like R11.7 (46 aa).

4-hydroxyproline is present on residues Pro2 and Pro11. Intrachain disulfides connect Cys5-Cys19, Cys12-Cys22, Cys18-Cys27, and Cys21-Cys38. Pro29 is modified (4-hydroxyproline). The residue at position 44 (Phe44) is a D-phenylalanine.

It belongs to the conotoxin I1 superfamily. Expressed by the venom duct.

The protein resides in the secreted. Functionally, iota-conotoxins bind to voltage-gated sodium channels (Nav) and act as agonists by shifting the voltage-dependence of activation to more hyperpolarized levels. Produces general excitatory symptoms. The polypeptide is Iota-conotoxin-like R11.7 (Conus radiatus (Rayed cone)).